Consider the following 216-residue polypeptide: Large ribosomal subunit protein bL21 (216 aa).

It belongs to the bacterial ribosomal protein bL21 family. In terms of assembly, part of the 50S ribosomal subunit. Contacts protein L20.

Its function is as follows. This protein binds to 23S rRNA in the presence of protein L20. The polypeptide is Large ribosomal subunit protein bL21 (Roseobacter denitrificans (strain ATCC 33942 / OCh 114) (Erythrobacter sp. (strain OCh 114))).